The following is a 214-amino-acid chain: tRNA (guanine-N(7)-)-methyltransferase (214 aa).

Glu-44, Glu-69, Asp-96, and Asp-118 together coordinate S-adenosyl-L-methionine. Residue Asp-118 is part of the active site. Lys-122 is a binding site for substrate. The tract at residues Arg-124–Arg-129 is interaction with RNA. Substrate contacts are provided by residues Asp-154 and Thr-192 to Glu-195.

It belongs to the class I-like SAM-binding methyltransferase superfamily. TrmB family.

The catalysed reaction is guanosine(46) in tRNA + S-adenosyl-L-methionine = N(7)-methylguanosine(46) in tRNA + S-adenosyl-L-homocysteine. It participates in tRNA modification; N(7)-methylguanine-tRNA biosynthesis. Its function is as follows. Catalyzes the formation of N(7)-methylguanine at position 46 (m7G46) in tRNA. The sequence is that of tRNA (guanine-N(7)-)-methyltransferase from Lactiplantibacillus plantarum (strain ATCC BAA-793 / NCIMB 8826 / WCFS1) (Lactobacillus plantarum).